A 551-amino-acid polypeptide reads, in one-letter code: MPKYVFVTGGVVSSVGKGITTAAIGRLLKSRGLRVALMKLDPYLNVDPGTMSPYQHGEVFVTEDGAETDLDLGHYERFTDENLSRASNVTTGQVYSAVIAKERRGDYLGGTVQVIPHITNEIKARIRQVAELHRPDVIVVEVGGTVGDIEGQPFLEAIRQMRREEGRRNVLYIHVTFLPYIASTGEVKTKPTQHSVKELRAIGIQPDVIICRTDHPVGDDVRAKVALFGDVDEDAVILLPTAETIYEVPLMLERAGLGRYVMEHLGWDDRDPDLADWERMVERLKSPRRRLRIALVGKYVELHDAYLSVVEALRHAGLAHDVAVEIVWVNSTAERSEIEAALRHVNGIVVPGGFGPRGVEGKMLAARYARERGIPYLGLCYGLHMAVIEFARNVLGLCGANSTEIDPETPHPVIDLMPDQRGVEMGGTMRLGRYPCQLVPGTKAALAYGESLVYERHRHRWEVNNAYREAFEAAGFVVSGQSPDGRYVEIMELHDHPWFVGVQFHPEFKSRPNRPHPLFVAFIGVAKHVLREGEQRPLPLAEPVAMPAADD.

Residues 1-267 (MPKYVFVTGG…GRYVMEHLGW (267 aa)) form an amidoligase domain region. Serine 13 contacts CTP. A UTP-binding site is contributed by serine 13. Position 14–19 (14–19 (SVGKGI)) interacts with ATP. Tyrosine 54 provides a ligand contact to L-glutamine. Aspartate 71 provides a ligand contact to ATP. Mg(2+)-binding residues include aspartate 71 and glutamate 141. CTP is bound by residues 148–150 (DIE), 188–193 (KTKPTQ), and lysine 224. UTP is bound by residues 188-193 (KTKPTQ) and lysine 224. Residues 292–532 (RIALVGKYVE…IGVAKHVLRE (241 aa)) enclose the Glutamine amidotransferase type-1 domain. Glycine 353 is a binding site for L-glutamine. Cysteine 380 (nucleophile; for glutamine hydrolysis) is an active-site residue. Residues 381–384 (YGLH), glutamate 404, and arginine 460 contribute to the L-glutamine site. Active-site residues include histidine 505 and glutamate 507.

The protein belongs to the CTP synthase family. As to quaternary structure, homotetramer.

The enzyme catalyses UTP + L-glutamine + ATP + H2O = CTP + L-glutamate + ADP + phosphate + 2 H(+). It carries out the reaction L-glutamine + H2O = L-glutamate + NH4(+). The catalysed reaction is UTP + NH4(+) + ATP = CTP + ADP + phosphate + 2 H(+). Its pathway is pyrimidine metabolism; CTP biosynthesis via de novo pathway; CTP from UDP: step 2/2. Allosterically activated by GTP, when glutamine is the substrate; GTP has no effect on the reaction when ammonia is the substrate. The allosteric effector GTP functions by stabilizing the protein conformation that binds the tetrahedral intermediate(s) formed during glutamine hydrolysis. Inhibited by the product CTP, via allosteric rather than competitive inhibition. Catalyzes the ATP-dependent amination of UTP to CTP with either L-glutamine or ammonia as the source of nitrogen. Regulates intracellular CTP levels through interactions with the four ribonucleotide triphosphates. This Thermomicrobium roseum (strain ATCC 27502 / DSM 5159 / P-2) protein is CTP synthase.